A 662-amino-acid polypeptide reads, in one-letter code: A-kinase anchor protein 10, mitochondrial (662 aa).

The transit peptide at 1–28 directs the protein to the mitochondrion; that stretch reads MRGAGPSPRHSPRALRPDPGPAMSFFRR. Disordered regions lie at residues 1-55, 178-205, and 242-280; these read MRGA…SPQK, KQSSLAEPVSPSKRHETPASSVTEALDR, and GHSARSLHREVARTGSHQIPTDSQDSSSRLAVGSRNSCS. Over residues 32-43 the composition is skewed to basic and acidic residues; the sequence is GKEQEKTLDVKS. A phosphoserine mark is found at Ser-52 and Ser-189. RGS domains lie at 125 to 369 and 379 to 505; these read TLEQ…CKYQ and YLAD…YKYL. Residues 256–280 are compositionally biased toward polar residues; that stretch reads GSHQIPTDSQDSSSRLAVGSRNSCS. Residue Ser-281 is modified to Phosphoserine. The segment at 634–647 is PKA-RII subunit binding; that stretch reads LAWKIAKMIVSDVM.

In terms of tissue distribution, highly expressed in testis, kidney and lung, followed by brain, skeletal muscle, liver, spleen and heart. Also expressed in brown adipose tissue and pancreas.

Its subcellular location is the mitochondrion. It is found in the membrane. It localises to the cytoplasm. In terms of biological role, differentially targeted protein that binds to type I and II regulatory subunits of protein kinase A and anchors them to the mitochondria or the plasma membrane. Although the physiological relevance between PKA and AKAPS with mitochondria is not fully understood, one idea is that BAD, a proapoptotic member, is phosphorylated and inactivated by mitochondria-anchored PKA. It cannot be excluded too that it may facilitate PKA as well as G protein signal transduction, by acting as an adapter for assembling multiprotein complexes. With its RGS domain, it could lead to the interaction to G-alpha proteins, providing a link between the signaling machinery and the downstream kinase. This chain is A-kinase anchor protein 10, mitochondrial (Akap10), found in Mus musculus (Mouse).